The sequence spans 336 residues: Dual specificity mitogen-activated protein kinase kinase sek-1 (336 aa).

In terms of domain architecture, Protein kinase spans 50-311 (LVVLEELGKG…YPELLAMPFM (262 aa)). ATP is bound by residues 56 to 64 (LGKGGYGIV) and K79. D176 functions as the Proton acceptor in the catalytic mechanism. S204 is subject to Phosphoserine. Residue T208 is modified to Phosphothreonine.

Belongs to the protein kinase superfamily. STE Ser/Thr protein kinase family. MAP kinase kinase subfamily. Interacts with nsy-1. Interacts with unc-16. Requires Mg(2+) as cofactor. Expressed in linker cell in males.

The catalysed reaction is L-seryl-[protein] + ATP = O-phospho-L-seryl-[protein] + ADP + H(+). The enzyme catalyses L-threonyl-[protein] + ATP = O-phospho-L-threonyl-[protein] + ADP + H(+). It catalyses the reaction L-tyrosyl-[protein] + ATP = O-phospho-L-tyrosyl-[protein] + ADP + H(+). Its activity is regulated as follows. Activated by nsy-1-mediated phosphorylation. In terms of biological role, dual specificity protein kinase which acts as an essential component of the p38 signal transduction pathway which is also composed of upstream effector nsy-1 and downstream effector pmk-1. May phosphorylate pmk-1. Downstream of CaMKII unc-43 and adapter protein tir-1, plays a role in determining asymmetric cell fates in olfactory AWC neurons during neuronal development. Activation results in the repression of odorant receptor str-2 expression in one of the 2 AWC neurons. Involved in resistance to pathogenic Gram-positive and Gram-negative bacterial and fungal infection. Involved in resistance to the nematotoxic C.cinerea galectin Cgl2. Probably by promoting pmk-1-mediated activation of skn-1, involved in the up-regulation of gcs-1 and glutathione-S-transferase gst-4 expression upon bacterial infection. Probably downstream of tir-1, required for the expression of antimicrobial peptide nlp-29 in the epidermis in response to fungal infection or physical injury. Regulates susceptibility of B.thuringiensis pore-forming toxin Cry5B and Cry21A. Involved in the response to oxidative stress. May regulate transcription factor daf-16 localization during oxidative stress. By phosphorylating pmk-1, regulates skn-1 localization during oxidative stress. By phosphorylating and activating pmk-1, plays a role in the stabilization of transcription factor rnt-1 in the intestine during oxidative stress. Up-regulates expression of gcs-1 in intestine upon arsenite treatment. Regulates germline proliferation in response to osmotic stress, starvation and germline apoptosis induced by heavy metals, such as Cu(2+). In association with mek-1, regulates germline cell apoptosis in response to oxidative, osmotic and heat shock stresses. Plays a role downstream of tir-1/nsy-1 in regulating susceptibility to anoxia. In males, by regulating pqn-41 expression, involved in non-apoptotic death of the linker cell which guides gonad elongation during larval development. Involved in egg laying. This Caenorhabditis elegans protein is Dual specificity mitogen-activated protein kinase kinase sek-1.